Reading from the N-terminus, the 130-residue chain is MSAAGVRSTRQRAAISTLLETLDDFRSAQELHDELRRRGENIGLTTVYRTLQSMASSGLVDTLHTDTGESVYRRCSEHHHHHLVCRSCGSTIEVGDHEVEAWAAEVATKHGFSDVSHTIEIFGTCSDCRS.

Asp61, Cys75, His79, His80, His81, His82, Cys85, Cys88, Glu100, His117, Cys125, and Cys128 together coordinate Zn(2+).

The protein belongs to the Fur family. In terms of assembly, homodimer. Requires Zn(2+) as cofactor.

It is found in the cytoplasm. Functionally, global transcriptional regulator involved in zinc homeostasis. The sequence is that of Zinc uptake regulation protein (zur) from Mycobacterium tuberculosis (strain CDC 1551 / Oshkosh).